Consider the following 298-residue polypeptide: MPELPEVETVRRGLAPAMEGARVRKLHLGRPDLRFPFPADFAGLIEGKTIISLGRRAKYLLIELEDGLTIVSHLGMSGSFRIEAEKGEGGEAPGAFHYARSKDGKHDHVVFHLDKGEERVCVIYNDPRRFGFMHLVERNKLDLYPAFAELGPEPTGNALSADYLASRFEGKSQPLKSTLLDQKIIAGLGNIYVCEALWRAHLSPLRAAGTLVTTRGKPKAQLIDLTEKIRDVIADAIAAGGSSLRDHIQTDGTLGYFQHSFSVYDQEGQPCRTPGCGGTVERVVQAGRSTFYCAACQK.

The active-site Schiff-base intermediate with DNA is Pro-2. Glu-3 serves as the catalytic Proton donor. The active-site Proton donor; for beta-elimination activity is the Lys-58. 3 residues coordinate DNA: His-106, Arg-128, and Lys-171. The segment at Ser-262–Lys-298 adopts an FPG-type zinc-finger fold. The active-site Proton donor; for delta-elimination activity is Arg-288.

The protein belongs to the FPG family. In terms of assembly, monomer. It depends on Zn(2+) as a cofactor.

It carries out the reaction Hydrolysis of DNA containing ring-opened 7-methylguanine residues, releasing 2,6-diamino-4-hydroxy-5-(N-methyl)formamidopyrimidine.. The catalysed reaction is 2'-deoxyribonucleotide-(2'-deoxyribose 5'-phosphate)-2'-deoxyribonucleotide-DNA = a 3'-end 2'-deoxyribonucleotide-(2,3-dehydro-2,3-deoxyribose 5'-phosphate)-DNA + a 5'-end 5'-phospho-2'-deoxyribonucleoside-DNA + H(+). Its function is as follows. Involved in base excision repair of DNA damaged by oxidation or by mutagenic agents. Acts as a DNA glycosylase that recognizes and removes damaged bases. Has a preference for oxidized purines, such as 7,8-dihydro-8-oxoguanine (8-oxoG). Has AP (apurinic/apyrimidinic) lyase activity and introduces nicks in the DNA strand. Cleaves the DNA backbone by beta-delta elimination to generate a single-strand break at the site of the removed base with both 3'- and 5'-phosphates. This Agrobacterium fabrum (strain C58 / ATCC 33970) (Agrobacterium tumefaciens (strain C58)) protein is Formamidopyrimidine-DNA glycosylase (mutM).